A 997-amino-acid chain; its full sequence is Glutamate [NMDA] receptor subunit 1 (997 aa).

The first 26 residues, 1–26 (MAMAEFVFCRPLFGLAIVLLVAPIDA), serve as a signal peptide directing secretion. Residues 27 to 573 (AQRHTASDNP…TLVSFLQPFS (547 aa)) lie on the Extracellular side of the membrane. N-linked (GlcNAc...) asparagine glycans are attached at residues asparagine 258, asparagine 314, asparagine 345, asparagine 397, asparagine 454, asparagine 481, and asparagine 501. Glycine-binding positions include 530–532 (PLT) and arginine 537. Residues 574 to 594 (NTLWILVMVSVHVVALVLYLL) form a helical membrane-spanning segment. Topologically, residues 595–651 (DRFSPFGRFKLSHSDSNEEKALNLSSAVWFAWGVLLNSGIGEGTPRSFSARVLGMVW) are cytoplasmic. A helical transmembrane segment spans residues 652 to 672 (AGFAMIIVASYTANLAAFLVL). Residues 673–831 (ERPKTKLSGI…KTPNTLGLKN (159 aa)) lie on the Extracellular side of the membrane. The N-linked (GlcNAc...) asparagine glycan is linked to asparagine 693. 2 residues coordinate glycine: serine 703 and aspartate 747. The chain crosses the membrane as a helical span at residues 832–852 (MAGVFILVGVGIAGGVGLIII). At 853–997 (EVIYKKHQVK…YTSDVSHLVV (145 aa)) the chain is on the cytoplasmic side. Positions 970 to 997 (LGKTRPQQSVLPPRYSPGYTSDVSHLVV) are disordered. Residues 987 to 997 (GYTSDVSHLVV) show a composition bias toward polar residues.

This sequence belongs to the glutamate-gated ion channel (TC 1.A.10.1) family. In terms of assembly, forms a heteromeric NMDA channel with Nmdar2. In terms of tissue distribution, highly expressed in adult heads: in the brain and ring gland. Low expression throughout the entire brain is also seen. Higher expression levels were observed in some scattered cell bodies and part of their fibers, including those from several pairs of DPM (dorsal-posterior-medial) neurons surrounding the calyx, DAL (dorsal-anterior-lateral) and DPL (dorsal-posterior-lateral) neurons in the lateral protocerebrum (LP), VAL (ventral-anterior-lateral) neurons in the anterior protocerebrum, and two pairs of VP (ventral-posterior) neurons in the posterior protocerebrum. Many cell bodies in the optic lobes show preferential expression. Punctuate expression is notably detected in many brain regions including the superior medial protocerebrum. Weakly expressed in the antennal lobes and central complex.

It localises to the cell membrane. The protein localises to the postsynaptic cell membrane. Its subcellular location is the postsynaptic density. Functionally, NMDA receptor subtype of glutamate-gated ion channels with high calcium permeability and voltage-dependent sensitivity to magnesium. Mediated by glycine. This protein plays a key role in synaptic plasticity, synaptogenesis, excitotoxicity, memory acquisition and learning. It mediates neuronal functions in glutamate neurotransmission. Is involved in the cell surface targeting of NMDA receptors. Plays a role in associative learning and in long-term memory consolidation. The polypeptide is Glutamate [NMDA] receptor subunit 1 (Drosophila melanogaster (Fruit fly)).